We begin with the raw amino-acid sequence, 606 residues long: Transmembrane 9 superfamily member 1 (606 aa).

An N-terminal signal peptide occupies residues 1–27; that stretch reads MTVLGYPRSWSCHCLPVLILLLGIGHG. An N-linked (GlcNAc...) asparagine glycan is attached at Asn-178. Transmembrane regions (helical) follow at residues 237-257, 310-330, 339-359, and 373-393; these read LSII…AVIL, VLGV…MALL, GAIN…SGYV, and VWNI…TWSV. Asn-401 carries N-linked (GlcNAc...) asparagine glycosylation. 4 consecutive transmembrane segments (helical) span residues 412 to 432, 469 to 489, 499 to 519, and 535 to 555; these read ILLL…IGGI, VGGF…FATV, GILF…SIAL, and SVLS…FYYA. Asn-559 carries N-linked (GlcNAc...) asparagine glycosylation. Residues 570-590 form a helical membrane-spanning segment; the sequence is FGYSLLTGYVFFLMLGTISFF.

The protein belongs to the nonaspanin (TM9SF) (TC 9.A.2) family.

The protein resides in the lysosome membrane. It localises to the cytoplasmic vesicle. Its subcellular location is the autophagosome membrane. Plays an essential role in autophagy. The chain is Transmembrane 9 superfamily member 1 (Tm9sf1) from Mus musculus (Mouse).